The following is a 185-amino-acid chain: Ribosome-recycling factor (185 aa).

It belongs to the RRF family.

It is found in the cytoplasm. Functionally, responsible for the release of ribosomes from messenger RNA at the termination of protein biosynthesis. May increase the efficiency of translation by recycling ribosomes from one round of translation to another. This chain is Ribosome-recycling factor, found in Streptococcus pneumoniae (strain 70585).